Consider the following 378-residue polypeptide: Erythronate-4-phosphate dehydrogenase (378 aa).

Substrate is bound by residues serine 45 and threonine 66. Aspartate 146 provides a ligand contact to NAD(+). Arginine 207 is a catalytic residue. Position 231 (aspartate 231) interacts with NAD(+). Glutamate 236 is a catalytic residue. Histidine 253 functions as the Proton donor in the catalytic mechanism. Residue glycine 256 participates in NAD(+) binding.

It belongs to the D-isomer specific 2-hydroxyacid dehydrogenase family. PdxB subfamily. In terms of assembly, homodimer.

The protein resides in the cytoplasm. The catalysed reaction is 4-phospho-D-erythronate + NAD(+) = (R)-3-hydroxy-2-oxo-4-phosphooxybutanoate + NADH + H(+). The protein operates within cofactor biosynthesis; pyridoxine 5'-phosphate biosynthesis; pyridoxine 5'-phosphate from D-erythrose 4-phosphate: step 2/5. In terms of biological role, catalyzes the oxidation of erythronate-4-phosphate to 3-hydroxy-2-oxo-4-phosphonooxybutanoate. In Wigglesworthia glossinidia brevipalpis, this protein is Erythronate-4-phosphate dehydrogenase.